We begin with the raw amino-acid sequence, 587 residues long: Dynein axonemal intermediate chain 2 (587 aa).

WD repeat units lie at residues 214–254 (RPAS…NPVE), 261–302 (SHRD…EPTE), 362–401 (GHHG…SSIM), and 405–445 (YHTS…NNPS). Disordered regions lie at residues 519-542 (LKER…DMKE) and 562-587 (KEQQ…IVHE).

The protein belongs to the dynein intermediate chain family. Consists of at least two heavy chains and a number of intermediate and light chains. Interacts with DNAAF2. Interacts with DNAAF6/PIH1D3. Interacts with HEATR2; probably involved in outer arm dynein assembly. Interacts with C16ORF71/DAAP1.

The protein localises to the cytoplasm. The protein resides in the cytoskeleton. It is found in the cilium axoneme. It localises to the dynein axonemal particle. Functionally, part of the dynein complex of multiciliated cell cilia. The sequence is that of Dynein axonemal intermediate chain 2 (dnai2) from Xenopus laevis (African clawed frog).